Reading from the N-terminus, the 48-residue chain is uncharacterized protein (48 aa).

It localises to the mitochondrion. This is an uncharacterized protein from Emericella nidulans (Aspergillus nidulans).